The chain runs to 108 residues: Small ribosomal subunit protein bS18c (108 aa).

Composition is skewed to basic residues over residues 1 to 19 (MDKSKRTFRKSKRSFRRRL) and 97 to 108 (RARKKKIGLLLN). Disordered stretches follow at residues 1–23 (MDKSKRTFRKSKRSFRRRLPPIG) and 83–108 (QFERTESTPRTTGTRARKKKIGLLLN).

The protein belongs to the bacterial ribosomal protein bS18 family. In terms of assembly, part of the 30S ribosomal subunit.

The protein resides in the plastid. It localises to the chloroplast. This Illicium oligandrum (Star anise) protein is Small ribosomal subunit protein bS18c.